An 81-amino-acid polypeptide reads, in one-letter code: Short neurotoxin 2 (81 aa).

The N-terminal stretch at 1–21 (MKTLLLTLVVVTIVCLDLGYT) is a signal peptide. 4 disulfide bridges follow: C24–C43, C38–C60, C62–C73, and C74–C79.

The protein belongs to the three-finger toxin family. Short-chain subfamily. Type I alpha-neurotoxin sub-subfamily. In terms of tissue distribution, expressed by the venom gland.

Its subcellular location is the secreted. Its function is as follows. Binds to muscle nicotinic acetylcholine receptor (nAChR) and inhibit acetylcholine from binding to the receptor, thereby impairing neuromuscular transmission. The polypeptide is Short neurotoxin 2 (Cryptophis nigrescens (Eastern small-eyed snake)).